The sequence spans 565 residues: Adenine deaminase 1 (565 aa).

Belongs to the metallo-dependent hydrolases superfamily. Adenine deaminase family. Requires Mn(2+) as cofactor.

The enzyme catalyses adenine + H2O + H(+) = hypoxanthine + NH4(+). In Rhizobium meliloti (strain 1021) (Ensifer meliloti), this protein is Adenine deaminase 1.